A 189-amino-acid polypeptide reads, in one-letter code: Movement protein (189 aa).

It belongs to the tombusvirus/aureusvirus movement protein p22 family. In terms of assembly, interacts with host protein HFI22. Phosphorylated.

The protein resides in the host membrane. Its function is as follows. Transports viral genome to neighboring plant cells directly through plasmosdesmata, without any budding. The movement protein allows efficient cell to cell propagation, by bypassing the host cell wall barrier. The polypeptide is Movement protein (Capsicum annuum (Capsicum pepper)).